Consider the following 416-residue polypeptide: Gap junction alpha-3 protein (416 aa).

An intramembrane segment occupies 2–15 (GDWSFLGRLLENAQ). The Cytoplasmic portion of the chain corresponds to 16–19 (EHST). A helical membrane pass occupies residues 20 to 40 (VIGKVWLTVLFIFRILVLGAA). Residues 41–71 (AEEVWGDEQSDFTCNTQQPGCENVCYDRAFP) lie on the Extracellular side of the membrane. 3 disulfides stabilise this stretch: Cys54–Cys198, Cys61–Cys192, and Cys65–Cys187. The chain crosses the membrane as a helical span at residues 72–92 (ISHIRFWALQIIFVSTPTLIY). The Cytoplasmic segment spans residues 93–158 (LGHVLHIVRM…GALLRTYVFN (66 aa)). The segment covering 110-128 (EEELLRRDNPQHGRGREPM) has biased composition (basic and acidic residues). The segment at 110 to 141 (EEELLRRDNPQHGRGREPMRTGSPRDPPLRDD) is disordered. The helical transmembrane segment at 159–179 (IIFKTLFEVGFIAGQYFLYGF) threads the bilayer. Over 180–207 (QLQPLYRCDRWPCPNTVDCFISRPTEKT) the chain is Extracellular. A helical membrane pass occupies residues 208 to 228 (IFVIFMLAVACASLVLNMLEI). At 229-416 (YHLGWKKLKQ…GRARPGDLAI (188 aa)) the chain is on the cytoplasmic side. The tract at residues 336-416 (GAEPQTPASK…GRARPGDLAI (81 aa)) is disordered. Positions 342 to 353 (PASKPSSAASSP) are enriched in low complexity.

The protein belongs to the connexin family. Alpha-type (group II) subfamily. In terms of assembly, a hemichannel or connexon is composed of a hexamer of connexins. A functional gap junction is formed by the apposition of two hemichannels. Forms heteromeric channels with GJA8. In terms of tissue distribution, detected in eye lens (at protein level). Most abundant in lens, but also present in heart and kidney.

The protein localises to the cell membrane. The protein resides in the cell junction. It localises to the gap junction. Its function is as follows. Structural component of lens fiber gap junctions. Gap junctions are dodecameric channels that connect the cytoplasm of adjoining cells. They are formed by the docking of two hexameric hemichannels, one from each cell membrane. Small molecules and ions diffuse from one cell to a neighboring cell via the central pore. This chain is Gap junction alpha-3 protein (Gja3), found in Rattus norvegicus (Rat).